Reading from the N-terminus, the 262-residue chain is Succinate dehydrogenase [ubiquinone] iron-sulfur subunit (262 aa).

The 2Fe-2S ferredoxin-type domain maps to 21-110 (KLIKIFRWDS…NNIIYVYPLP (90 aa)). 4 residues coordinate [2Fe-2S] cluster: Cys73, Cys78, Cys81, and Cys93. Residues 154–184 (DRLYLDGLYECILCACCSASCPSYWWNHDKY) form the 4Fe-4S ferredoxin-type domain. The [4Fe-4S] cluster site is built by Cys164, Cys167, and Cys170. Cys174 provides a ligand contact to [3Fe-4S] cluster. Trp179 is an a ubiquinone binding site. Residues Cys221 and Cys227 each contribute to the [3Fe-4S] cluster site. Cys231 contacts [4Fe-4S] cluster.

This sequence belongs to the succinate dehydrogenase/fumarate reductase iron-sulfur protein family. Component of complex II composed of four subunits: a flavoprotein (FP), an iron-sulfur protein (IP), and a cytochrome b composed of a large and a small subunit. [2Fe-2S] cluster serves as cofactor. [3Fe-4S] cluster is required as a cofactor. It depends on [4Fe-4S] cluster as a cofactor.

The protein localises to the mitochondrion inner membrane. It catalyses the reaction a quinone + succinate = fumarate + a quinol. The protein operates within carbohydrate metabolism; tricarboxylic acid cycle; fumarate from succinate (eukaryal route): step 1/1. In terms of biological role, iron-sulfur protein (IP) subunit of succinate dehydrogenase (SDH) that is involved in complex II of the mitochondrial electron transport chain and is responsible for transferring electrons from succinate to ubiquinone (coenzyme Q). This is Succinate dehydrogenase [ubiquinone] iron-sulfur subunit (SDH2) from Cyanidium caldarium (Red alga).